The primary structure comprises 1172 residues: NACHT, LRR and PYD domains-containing protein 1b allele 3 (1172 aa).

The interval 1 to 22 (MEESPPKQKSNTKVAQHEGQQD) is disordered. The NACHT domain occupies 126–435 (QLVIIEGAAG…EFFAAISCIL (310 aa)). 132-139 (GAAGIGKS) serves as a coordination point for ATP. LRR repeat units lie at residues 627–647 (NLEGLDLSGNSLRYSVVQSLC) and 684–704 (SLTELYLQLNDLGDDGVRMLC). The interval 789-922 (FWGPTGPVAT…GYTVLKNPSF (134 aa)) is ZU5. Positions 789 to 1072 (FWGPTGPVAT…LRPALPRIAQ (284 aa)) constitute an FIIND domain. The segment at 923 to 1072 (SPMGDVLRII…LRPALPRIAQ (150 aa)) is UPA. The region spanning 1082 to 1165 (HFMDQHREQL…HLVMDLLEKS (84 aa)) is the CARD domain.

It belongs to the NLRP family. Post-translationally, in contrast to allele 1 and 2, not able to mediate autocatalytic cleavage. As to expression, expressed in macrophages.

The protein localises to the cytoplasm. It is found in the cytosol. In contrast to allele 1, does not undergo autocatalytic cleavage within the FIIND domain and its mode of activation remains unclear. In contrast to alleles 1 and 2, allele 3 is not activated by Val-boroPro (Talabostat, PT-100). Not activated by cleavage by B.anthracis lethal toxin (LT) endopeptidase. Not activated by metabolic inhibitors, such as 2-deoxy-D-glucose and sodium azide. Functionally, may act as the sensor component of the Nlrp1b inflammasome, which mediates inflammasome activation in response to various pathogen-associated signals, leading to subsequent pyroptosis. Inflammasomes are supramolecular complexes that assemble in the cytosol in response to pathogens and other damage-associated signals and play critical roles in innate immunity and inflammation. May act as a recognition receptor (PRR), which recognizes specific pathogens and other damage-associated signals and forms an inflammasome complex: the inflammasome directly recruits pro-caspase-1 (proCASP1) independently of PYCARD/ASC and promotes caspase-1 (CASP1) activation, which subsequently cleaves and activates inflammatory cytokines IL1B and IL18 and gasdermin-D (GSDMD), leading to pyroptosis. In the absence of GSDMD expression, the Nlrp1b inflammasome is able to recruit and activate CASP8, leading to activation of gasdermin-E (GSDME). Contrary to Nlrp1b allele 1, allele 3 is not activated by Bacillus anthracis lethal toxin. The absence of autocatalytic cleavage within the FIIND domain, which regulates activation in other alleles, suggests that allele 3 may be non-functional. The chain is NACHT, LRR and PYD domains-containing protein 1b allele 3 from Mus musculus (Mouse).